A 199-amino-acid polypeptide reads, in one-letter code: Small ribosomal subunit protein uS2 (199 aa).

It belongs to the universal ribosomal protein uS2 family.

The chain is Small ribosomal subunit protein uS2 (rps2) from Thermoplasma volcanium (strain ATCC 51530 / DSM 4299 / JCM 9571 / NBRC 15438 / GSS1).